Consider the following 232-residue polypeptide: Small ribosomal subunit protein uS3 (232 aa).

The KH type-2 domain maps to 39-107 (VRQFLTKELQ…PAQINIAEVR (69 aa)). The interval 213–232 (AANAVEPKGDKPKKQRKGRK) is disordered.

It belongs to the universal ribosomal protein uS3 family. In terms of assembly, part of the 30S ribosomal subunit. Forms a tight complex with proteins S10 and S14.

Functionally, binds the lower part of the 30S subunit head. Binds mRNA in the 70S ribosome, positioning it for translation. The polypeptide is Small ribosomal subunit protein uS3 (Vibrio campbellii (strain ATCC BAA-1116)).